A 396-amino-acid chain; its full sequence is Transcription factor IIIB 50 kDa subunit (396 aa).

The TFIIB-type zinc finger occupies 3–36; sequence GAKRCPDCGSSEIVEDAHYSQDQLVCADCGCILS. Residues cysteine 7, cysteine 10, cysteine 28, and cysteine 31 each coordinate Zn(2+). Copy 2 of the repeat occupies 173–249; the sequence is VKSHCRSFKL…SRRLSCSLSR (77 aa). Cysteine 342 carries the post-translational modification Cysteine sulfenic acid (-SOH).

Belongs to the TFIIB family. Component of TFIIIB complexes. Interacts with TBP and forms a ternary complex with TBp and target DNA sequences. Post-translationally, in response to oxidative stress, a Cys-residue is reversibly oxidized to cysteine sulfenic acid. This impairs formation of a ternary complex with TBP and DNA and down-regulates expression of target genes in response to oxidative stress.

The protein resides in the nucleus. Functionally, general activator of RNA polymerase III transcription. Factor exclusively required for RNA polymerase III transcription of genes with promoter elements upstream of the initiation sites. Contributes to the regulation of gene expression; functions as activator in the absence of oxidative stress. Down-regulates expression of target genes in response to oxidative stress. Overexpression protects cells against apoptosis in response to oxidative stress. The sequence is that of Transcription factor IIIB 50 kDa subunit (brf2) from Xenopus laevis (African clawed frog).